A 1219-amino-acid polypeptide reads, in one-letter code: Polyamine-transporting ATPase 13A3 (1219 aa).

Topologically, residues 1-28 (MDKEERKTINKGQEDEMEIHGYNLCRWK) are cytoplasmic. The stretch at 29–49 (LAMVFVGVICTGGFLLLLLYW) is an intramembrane region. Residues 50 to 201 (LPEWRVKATC…IAVKVPSVFK (152 aa)) are Cytoplasmic-facing. The helical transmembrane segment at 202 to 222 (LLIKEVLNPFYIFQLFSVILW) threads the bilayer. Residues 223–228 (SVDEYY) lie on the Lumenal side of the membrane. A helical transmembrane segment spans residues 229-249 (YYALAIVIMSVVSIISSLYSI). Over 250–405 (RKQYVMLHDM…KPTDFKLYRD (156 aa)) the chain is Cytoplasmic. A helical transmembrane segment spans residues 406-426 (AYLFLLCLVVVAGIGFIYTII). Over 427-444 (NSILNEKEVQEIIIKSLD) the chain is Lumenal. A helical membrane pass occupies residues 445 to 465 (IITITVPPALPAAMTAGIVYA). The Cytoplasmic segment spans residues 466-936 (QRRLKKVGIF…ALMTSFCVFK (471 aa)). The active-site 4-aspartylphosphate intermediate is the Asp494. Residues Asp494 and Thr496 each contribute to the Mg(2+) site. ATP is bound by residues 494-496 (DKT), Phe624, Arg680, and Asp746. The residue at position 813 (Ser813) is a Phosphoserine. 2 residues coordinate Mg(2+): Asp879 and Asp883. Residue 879-883 (DGAND) participates in ATP binding. Residues 937–957 (FMALYSIIQYFSVTLLYSILS) form a helical membrane-spanning segment. Residue Asn958 is a topological domain, lumenal. The chain crosses the membrane as a helical span at residues 959–979 (LGDFQFLFIDLAIILVVVFTM). Topologically, residues 980-995 (SLNPAWKELVAQRPPS) are cytoplasmic. A helical transmembrane segment spans residues 996-1016 (GLISGALLFSVLSQIVISVGF). Residues 1017–1066 (QSLGFFWVKQYKVCDPNSDVCNTTRSACWNSSHLYNGTELDSCKIQNYEN) lie on the Lumenal side of the membrane. Residues 1067-1087 (TTVFFISSFQYLTVAVAFSKG) form a helical membrane-spanning segment. Over 1088–1098 (KPFRQPCYKNY) the chain is Cytoplasmic. A helical membrane pass occupies residues 1099-1119 (FFVISVIILYVFILFIMLHPV). Over 1120 to 1136 (ASVDQVLEIMCVPYQWR) the chain is Lumenal. Residues 1137-1157 (IYMLIIVLINAFVSITVEESV) traverse the membrane as a helical segment. Topologically, residues 1158-1219 (DRWGKCCLSW…NGSCQIITIA (62 aa)) are cytoplasmic.

This sequence belongs to the cation transport ATPase (P-type) (TC 3.A.3) family. Type V subfamily. As to expression, expression is greatest in liver, followed by kidney, colon, stomach, brain and small intestine. Isoform 1 is highly expressed in the kidney while isoform 2 is highly expressed in the brain.

The protein localises to the recycling endosome membrane. It localises to the early endosome membrane. The protein resides in the late endosome membrane. The enzyme catalyses putrescine(out) + ATP + H2O = putrescine(in) + ADP + phosphate + H(+). ATP-driven pump involved in endocytosis-dependent polyamine transport. Uses ATP as an energy source to transfer polyamine precursor putrescine from the endosomal compartment to the cytosol. This Mus musculus (Mouse) protein is Polyamine-transporting ATPase 13A3.